A 68-amino-acid polypeptide reads, in one-letter code: Adipokinetic prohormone type 1 (68 aa).

The N-terminal stretch at Met1–Ala20 is a signal peptide. The residue at position 21 (Gln21) is a Pyrrolidone carboxylic acid. Gly30 carries the glycine amide modification. The propeptide occupies Gly34–Pro68.

Expressed in antennal lobe (AL), corpora cardiaca (CC), corpora allata (CA) and gnathal ganglion (GNG) (at protein level). Expression in CC and CA detected in all animals, expression in GNG in some animals and in AL in few animals (at protein level).

Its subcellular location is the secreted. In terms of biological role, this hormone, released from cells in the corpora cardiaca, causes release of diglycerides from the fat body and stimulation of muscles to use these diglycerides as an energy source during energy-demanding processes. The protein is Adipokinetic prohormone type 1 of Agrotis ipsilon (Black cutworm moth).